Consider the following 325-residue polypeptide: Isoaspartyl peptidase/L-asparaginase (325 aa).

The Nucleophile role is filled by Thr-193. Residues 221-224 and 243-246 contribute to the substrate site; these read RIGD and TGKG.

The protein belongs to the Ntn-hydrolase family. Heterotetramer of two alpha and two beta chains arranged as a dimer of alpha/beta heterodimers. Cleaved into an alpha and beta chain by autocatalysis; this activates the enzyme. The N-terminal residue of the beta subunit is responsible for the nucleophile hydrolase activity. As to expression, expressed in ripening seeds and developing nodules.

The catalysed reaction is Cleavage of a beta-linked Asp residue from the N-terminus of a polypeptide.. Functionally, degrades proteins damaged by L-isoaspartyl residue formation (also known as beta-Asp residues). Also has L-asparaginase activity, which is used to liberate stored nitrogen during seed development. The polypeptide is Isoaspartyl peptidase/L-asparaginase (Lupinus luteus (European yellow lupine)).